We begin with the raw amino-acid sequence, 380 residues long: tRNA-specific 2-thiouridylase MnmA (380 aa).

Residues 10–17 and leucine 36 each bind ATP; that span reads AMSGGVDS. Catalysis depends on cysteine 106, which acts as the Nucleophile. Cysteine 106 and cysteine 202 are joined by a disulfide. ATP is bound at residue glycine 130. The segment at 152–154 is interaction with tRNA; it reads KNQ. Residue cysteine 202 is the Cysteine persulfide intermediate of the active site. Residues 308–309 form an interaction with tRNA region; it reads RY.

The protein belongs to the MnmA/TRMU family.

Its subcellular location is the cytoplasm. The catalysed reaction is S-sulfanyl-L-cysteinyl-[protein] + uridine(34) in tRNA + AH2 + ATP = 2-thiouridine(34) in tRNA + L-cysteinyl-[protein] + A + AMP + diphosphate + H(+). Its function is as follows. Catalyzes the 2-thiolation of uridine at the wobble position (U34) of tRNA, leading to the formation of s(2)U34. The polypeptide is tRNA-specific 2-thiouridylase MnmA (Leptospira biflexa serovar Patoc (strain Patoc 1 / Ames)).